The chain runs to 1158 residues: Nuclear receptor-interacting protein 1 (1158 aa).

The interaction with ZNF366 stretch occupies residues 1 to 415 (MTHGEELGSD…EESSTPTTID (415 aa)). Residues 21-25 (LEGLL) carry the LXXLL motif 1 motif. The segment at 33–56 (SGTAVDKKSAGHNEEDQNFNISGS) is disordered. The segment covering 37–47 (VDKKSAGHNEE) has biased composition (basic and acidic residues). The tract at residues 78 to 333 (MLHLKKARLL…HLNGQARTSS (256 aa)) is repression domain 1. Ser104 carries the phosphoserine modification. At Lys111 the chain carries N6-acetyllysine; alternate. A Glycyl lysine isopeptide (Lys-Gly) (interchain with G-Cter in SUMO2); alternate cross-link involves residue Lys111. The LXXLL motif 2 signature appears at 133-137 (LASLL). N6-acetyllysine is present on Lys158. Lys170 is covalently cross-linked (Glycyl lysine isopeptide (Lys-Gly) (interchain with G-Cter in SUMO2)). The LXXLL motif 3 signature appears at 185–189 (LKTLL). Residues Lys195 and Lys198 each participate in a glycyl lysine isopeptide (Lys-Gly) (interchain with G-Cter in SUMO2) cross-link. Phosphothreonine is present on Thr207. Ser218 carries the post-translational modification Phosphoserine. The short motif at 266–270 (LALLL) is the LXXLL motif 4 element. Lys286 and Lys310 each carry N6-acetyllysine. Ser356 carries the phosphoserine modification. Lys372 participates in a covalent cross-link: Glycyl lysine isopeptide (Lys-Gly) (interchain with G-Cter in SUMO2). At Ser378 the chain carries Phosphoserine. Positions 380-384 (LLHLL) match the LXXLL motif 5 motif. The disordered stretch occupies residues 393-435 (MNGHSHSERGSIFEESSTPTTIDEYSDNNPSFTDDSSGDESSY). The segment covering 406–435 (EESSTPTTIDEYSDNNPSFTDDSSGDESSY) has biased composition (polar residues). Residues 410–700 (TPTTIDEYSD…PTGPEPGLSG (291 aa)) are repression domain 2. The interval 431 to 472 (DESSYSNCVPIDLSCKHRTEKSESDQPVSLDNFTQSLLNTWD) is required for targeting to small nuclear foci. The short motif at 440–446 (PIDLSCK) is the CTBP-binding; principal site element. N6-acetyllysine is present on residues Lys446 and Lys481. Residue Ser487 is modified to Phosphoserine. Residues 500 to 504 (LLQLL) carry the LXXLL motif 6 motif. A Glycyl lysine isopeptide (Lys-Gly) (interchain with G-Cter in SUMO2) cross-link involves residue Lys508. Ser518 carries the post-translational modification Phosphoserine. Lys528 carries the N6-acetyllysine modification. The segment at 540-563 (IESPSTNRTTPVSTPPLLTSSKAG) is disordered. Ser542 is subject to Phosphoserine. Over residues 548–560 (TTPVSTPPLLTSS) the composition is skewed to low complexity. Residue Ser564 is modified to Phosphoserine. 2 short sequence motifs (CTBP-binding) span residues 565-569 (PINLS) and 599-603 (SMDLT). Disordered regions lie at residues 592 to 622 (TNTA…AQNS) and 641 to 663 (SSMS…DKPI). Residues 601 to 610 (DLTKSKDPPG) are compositionally biased toward basic and acidic residues. Position 606 is an N6-acetyllysine (Lys606). Over residues 641 to 659 (SSMSVEEQRPSKQLLTGNT) the composition is skewed to polar residues. Ser671 is subject to Phosphoserine. The LXXLL motif 7 signature appears at 713–717 (LQLLL). The segment at 716–745 (LLGNPNKGKSEKKEKTPLRDESTQEHSERA) is disordered. Basic and acidic residues predominate over residues 723–745 (GKSEKKEKTPLRDESTQEHSERA). The tract at residues 735–885 (DESTQEHSER…NIVDAANNHS (151 aa)) is repression domain 3. Positions 753-1158 (VKIKSEPCDD…SVLTIKKESE (406 aa)) are interaction with ZNF366. Residues Lys756 and Lys802 each participate in a glycyl lysine isopeptide (Lys-Gly) (interchain with G-Cter in SUMO2) cross-link. Ser807 is subject to Phosphoserine. Positions 819-823 (LSRLL) match the LXXLL motif 8 motif. Glycyl lysine isopeptide (Lys-Gly) (interchain with G-Cter in SUMO2) cross-links involve residues Lys850 and Lys901. N6-acetyllysine; alternate is present on Lys931. Lys931 participates in a covalent cross-link: Glycyl lysine isopeptide (Lys-Gly) (interchain with G-Cter in SUMO2); alternate. The LXXLL motif 9 motif lies at 936 to 940 (LKQLL). Residues 946-950 (VRDLS) carry the CTBP-binding motif. The interval 950 to 974 (SPHRSNSVADSKKKGHKNNVTNSKP) is disordered. At Ser1001 the chain carries Phosphoserine. The short motif at 1061–1074 (LTKTNPILYYMLQK) is the Ligand-dependent nuclear receptor binding element. Glycyl lysine isopeptide (Lys-Gly) (interchain with G-Cter in SUMO2) cross-links involve residues Lys1105, Lys1115, and Lys1154. Positions 1118-1158 (FFNLRSPYNSHMGNNASRPHSANGEVYGLLGSVLTIKKESE) are repression domain 4.

As to quaternary structure, interacts with RARA and RXRB homodimers and RARA/RXRB heterodimers in the presence of ligand. Interacts with HDAC1 and HDAC3 via its N-terminal domain. Interacts with NR2C1 (sumoylated form and via the ligand-binding domain); the interaction results in promoting the repressor activity of NR2C1. Interacts with CTBP1, CTBP2, ESR1, HDAC1, HDAC2, HDAC5, HDAC6, NR2C2, NR3C1, NR3C2, YWHAH, JUN and FOS. Found in a complex with both NR3C1 and YWHAH. Interacts with ZNF366. Interacts with RORA. Post-translationally, acetylation regulates its nuclear translocation and corepressive activity. Acetylation abolishes interaction with CTBP1. Phosphorylation enhances interaction with YWHAH.

It is found in the nucleus. In terms of biological role, modulates transcriptional activation by steroid receptors such as NR3C1, NR3C2 and ESR1. Also modulates transcriptional repression by nuclear hormone receptors. Positive regulator of the circadian clock gene expression: stimulates transcription of BMAL1, CLOCK and CRY1 by acting as a coactivator for RORA and RORC. Involved in the regulation of ovarian function. Plays a role in renal development. The sequence is that of Nuclear receptor-interacting protein 1 (NRIP1) from Homo sapiens (Human).